The chain runs to 255 residues: 4-hydroxy-tetrahydrodipicolinate reductase (255 aa).

NAD(+)-binding positions include 9–14 (GFKGKM), Asp-35, 89–91 (GTT), and 115–118 (APNF). The active-site Proton donor/acceptor is the His-145. His-146 serves as a coordination point for (S)-2,3,4,5-tetrahydrodipicolinate. The active-site Proton donor is the Lys-149. 155–156 (GT) contributes to the (S)-2,3,4,5-tetrahydrodipicolinate binding site.

Belongs to the DapB family.

The protein localises to the cytoplasm. It catalyses the reaction (S)-2,3,4,5-tetrahydrodipicolinate + NAD(+) + H2O = (2S,4S)-4-hydroxy-2,3,4,5-tetrahydrodipicolinate + NADH + H(+). The enzyme catalyses (S)-2,3,4,5-tetrahydrodipicolinate + NADP(+) + H2O = (2S,4S)-4-hydroxy-2,3,4,5-tetrahydrodipicolinate + NADPH + H(+). It participates in amino-acid biosynthesis; L-lysine biosynthesis via DAP pathway; (S)-tetrahydrodipicolinate from L-aspartate: step 4/4. Its function is as follows. Catalyzes the conversion of 4-hydroxy-tetrahydrodipicolinate (HTPA) to tetrahydrodipicolinate. This is 4-hydroxy-tetrahydrodipicolinate reductase from Streptococcus pneumoniae (strain P1031).